The primary structure comprises 127 residues: MAFKYWFVFAAVLYARQWLSTKCEVPQMTSSSAPDLEEEDDYTAYAPLTCYFTNSTLGLLAPPNCSVLCNSTTTWFNETSPNNASCLLTVDFLTQDAILQENQPYNCSVGHCDNGTCAGPPRHAQCW.

Positions 1 to 23 (MAFKYWFVFAAVLYARQWLSTKC) are cleaved as a signal peptide. Cystine bridges form between cysteine 50–cysteine 69, cysteine 65–cysteine 112, cysteine 86–cysteine 117, and cysteine 107–cysteine 126. N-linked (GlcNAc...) asparagine glycans are attached at residues asparagine 54, asparagine 64, asparagine 70, asparagine 77, asparagine 83, asparagine 106, and asparagine 114.

The protein belongs to the evasin C8 family. In terms of assembly, monomer.

It localises to the secreted. Salivary chemokine-binding protein which has chemokine-neutralizing activity and binds to host chemokines CCL1, CCL3, CCL5, CCL7, CCL8, CCL11, CCL14, CCL15, CCL16, CCL17, CCL18, CCL19, CCL21, CCL22, CCL23, CCL24, CCL25 and CCL26 with nanomolar affinity. Binds to CCL3 and CCL5 with 1:1 stoichiometry. Although binding to CCL25 is observed, does not inhibit CCL25-induced chemotaxis. Has been shown to reduce cardiac injury and inflammation in mice through its anti-CCL5 activity. This Rhipicephalus sanguineus (Brown dog tick) protein is Evasin-4.